We begin with the raw amino-acid sequence, 245 residues long: tRNA pseudouridine synthase A (245 aa).

Asp-52 functions as the Nucleophile in the catalytic mechanism. Tyr-111 is a substrate binding site.

The protein belongs to the tRNA pseudouridine synthase TruA family. As to quaternary structure, homodimer.

The catalysed reaction is uridine(38/39/40) in tRNA = pseudouridine(38/39/40) in tRNA. Its function is as follows. Formation of pseudouridine at positions 38, 39 and 40 in the anticodon stem and loop of transfer RNAs. The protein is tRNA pseudouridine synthase A of Rhodopseudomonas palustris (strain HaA2).